Here is a 1150-residue protein sequence, read N- to C-terminus: Solute carrier family 12 member 6 (1150 aa).

The disordered stretch occupies residues 1–108 (MHPPEATTKM…GEHSQLLDDG (108 aa)). The Cytoplasmic segment spans residues 1-135 (MHPPEATTKM…DEYFDKNLAL (135 aa)). Residues 28–45 (LSDTSPDLSSRSSSRVRF) show a composition bias toward low complexity. The residue at position 32 (Ser32) is a Phosphoserine. A compositionally biased stretch (polar residues) spans 80 to 101 (DRTSNPQDVTEDPSQNSITGEH). The residue at position 120 (Ser120) is a Phosphoserine. The discontinuously helical transmembrane segment at 136 to 158 (FEEEMDTRPKVSSLLNRMANYTN) threads the bilayer. Ser147 and Ser148 together coordinate K(+). Ser148 is modified (phosphoserine). Asn151 is a binding site for chloride. Residues 159 to 165 (LTQGAKE) are Extracellular-facing. The tract at residues 161–181 (QGAKEHEEAENITEGKKKPTK) is disordered. Basic and acidic residues predominate over residues 163–177 (AKEHEEAENITEGKK). Residues 166–188 (HEEAENITEGKKKPTKSPQMGTF) traverse the membrane as a helical segment. Over 189-211 (MGVYLPCLQNIFGVILFLRLTWV) the chain is Cytoplasmic. A helical transmembrane segment spans residues 212-245 (VGTAGILQAFAIVLICCCCTMLTAISMSAIATNG). The Extracellular portion of the chain corresponds to 246-263 (VVPAGGSYFMISRALGPE). The next 2 helical transmembrane spans lie at 264–287 (FGGA…ILGA) and 288–316 (IEIF…AMLN). Tyr283 is a binding site for K(+). Residues 317–433 (NMRVYGTAFL…FVHNNVISIQ (117 aa)) are Extracellular-facing. A disulfide bridge connects residues Cys375 and Cys390. N-linked (GlcNAc...) asparagine glycosylation is found at Asn379, Asn398, Asn411, and Asn417. Cys410 and Cys420 are disulfide-bonded. The helical transmembrane segment at 434 to 454 (GIPGLASGIITENLWSNYLPK) threads the bilayer. Residues Ile443, Thr444, and Asn446 each coordinate K(+). Chloride contacts are provided by Ile443 and Thr444. 2 residues coordinate chloride: Leu447 and Trp448. At 455-464 (GEIIEKPSAK) the chain is on the cytoplasmic side. Residues 465-487 (SSDVLGNLNHEYVLADITTSFTL) form a helical membrane-spanning segment. At 488–518 (LVGIFFPSVTGIMAGSNRSGDLKDAQKSIPI) the chain is on the extracellular side. A K(+)-binding site is contributed by Thr497. Residues 519–545 (GTILAILTTSFVYLSNVVLFGACIEGV) traverse the membrane as a helical segment. Residues 546 to 568 (VLRDKFGDAVKGNLVVGTLSWPS) are Cytoplasmic-facing. A run of 2 helical transmembrane segments spans residues 569 to 589 (PWVI…QSLT) and 590 to 612 (GAPR…VFGH). Residue Ile603 coordinates chloride. Over 613-629 (SKANGEPTWALLLTAAI) the chain is Cytoplasmic. The next 2 helical transmembrane spans lie at 630–649 (AELG…LSMF) and 650–665 (FLMC…ALQT). Residue Tyr654 participates in chloride binding. Topologically, residues 666–1150 (LLRTPNWRPR…GGSEVITIYS (485 aa)) are cytoplasmic. The interval 682–691 (ALSFMGMSIC) is scissor helix. Residue Ser736 is modified to Phosphoserine. Residue Thr778 is modified to Phosphothreonine. Ser981 is modified (phosphoserine). Position 991 is a phosphothreonine (Thr991). Phosphoserine is present on residues Ser1023, Ser1029, and Ser1032. Thr1048 is subject to Phosphothreonine. Tyr1121 bears the Phosphotyrosine mark.

It belongs to the SLC12A transporter family. K/Cl co-transporter subfamily. In terms of assembly, homodimer; adopts a domain-swap conformation at the scissor helices connecting the transmembrane domain and C-terminal domain. Heterodimer with K-Cl cotransporter SLC12A5. Interacts (via C-terminus) with CKB; the interaction may be required for potassium-chloride cotransport activity. Phosphorylated, phosphorylation regulates transporter activity. Phosphorylated at Thr-991 and Thr-1048 by OXSR1/OSR1 and STK39/SPAK downstream of WNK kinases (WNK1, WNK2, WNK3 or WNK4), inhibiting the potassium-chloride cotransport activity. Post-translationally, N-glycosylated. In terms of tissue distribution, expressed in hippocampus and corpus callosum (at protein level). Highly expressed throughout the brain and detected at lower levels in kidney. Highly expressed in highly myelinated white matter of the brain, but not in gray matter. Detected in the corpus callosum, in packed cell layers of the hippocampus and in Purkinje neurons within the cerebellum. Highly expressed in white matter in the spinal cord, but not in dorsal root ganglia or sciatic nerve. Colocalizes with the oligodendrocyte marker CNP. Expressed in hippocampus in CA1, and to a lesser extent CA3 pyramidal cells. Also expressed in cortex, mostly in large neurons and in the large cerebellar Purkinje cells. Highly expressed in kidney, but not detected in brain.

The protein resides in the cell membrane. Its subcellular location is the basolateral cell membrane. It catalyses the reaction K(+)(in) + chloride(in) = K(+)(out) + chloride(out). With respect to regulation, inhibited following phosphorylation by OXSR1/OSR1 and STK39/SPAK: phosphorylation takes place downstream of WNK kinases (WNK1, WNK2, WNK3 or WNK4) in response to hyperosmotic stress and subsequent cell shrinkage. Functionally, mediates electroneutral potassium-chloride cotransport when activated by cell swelling. May contribute to cell volume homeostasis in single cells. In terms of biological role, mediates electroneutral potassium-chloride cotransport when activated by cell swelling. May contribute to cell volume homeostasis in single cells. This chain is Solute carrier family 12 member 6 (Slc12a6), found in Mus musculus (Mouse).